The primary structure comprises 391 residues: Elongation factor Tu (391 aa).

In terms of domain architecture, tr-type G spans 10–201 (KPHVNIGTIG…AVDDYIPTPA (192 aa)). A G1 region spans residues 19–26 (GHVDHGKT). 19–26 (GHVDHGKT) is a binding site for GTP. Thr-26 lines the Mg(2+) pocket. Residues 55–59 (GITIS) form a G2 region. Positions 76–79 (DCPG) are G3. Residues 76 to 80 (DCPGH) and 131 to 134 (NKVD) contribute to the GTP site. The interval 131 to 134 (NKVD) is G4. The segment at 169–171 (SAL) is G5.

The protein belongs to the TRAFAC class translation factor GTPase superfamily. Classic translation factor GTPase family. EF-Tu/EF-1A subfamily. In terms of assembly, monomer.

The protein resides in the cytoplasm. The enzyme catalyses GTP + H2O = GDP + phosphate + H(+). GTP hydrolase that promotes the GTP-dependent binding of aminoacyl-tRNA to the A-site of ribosomes during protein biosynthesis. The polypeptide is Elongation factor Tu (Dinoroseobacter shibae (strain DSM 16493 / NCIMB 14021 / DFL 12)).